The sequence spans 1547 residues: Tubby-related protein 4 (1547 aa).

WD repeat units lie at residues 80 to 119 (GHNSEVVLVRWNEPYQKLATCDADGGIFVWIQYEGRWSVE), 123 to 162 (DRGAQVSDFTWSHDGTQALISYRDGFVLVGSVSGQRHWSS), and 165 to 204 (NLESQITCGIWTPDDQQVLFGTADGQVIVMDCHGRMLAHV). One can recognise an SOCS box domain in the interval 364–414 (ALYVVRVEHRVSSLQLLCQQAIASTLREDKDVNKLTLPPRLCSYLSTAFIP). The segment at 530–580 (SPKISRSSKSPKLPRISIEARKSPKLPRAAQEISRSPRLPMRKPSMGSPSL) is disordered. Over residues 533–546 (ISRSSKSPKLPRIS) the composition is skewed to low complexity. The residue at position 577 (Ser-577) is a Phosphoserine. Asymmetric dimethylarginine occurs at positions 949 and 954. Residues Ser-1347 and Ser-1378 each carry the phosphoserine modification. The tract at residues 1374–1414 (SLISSPRLGREKKKVKSQKDQLKSKKLNKTNEFQDSSESEP) is disordered. Residues 1436–1547 (SKRSLRTASE…ALANVTQRLK (112 aa)) are TUB.

Belongs to the TUB family.

It localises to the cytoplasm. The protein operates within protein modification; protein ubiquitination. May be a substrate-recognition component of a SCF-like ECS (Elongin-Cullin-SOCS-box protein) E3 ubiquitin ligase complex which mediates the ubiquitination and subsequent proteasomal degradation of target proteins. In Mus musculus (Mouse), this protein is Tubby-related protein 4 (Tulp4).